A 667-amino-acid chain; its full sequence is UvrABC system protein B (667 aa).

The Helicase ATP-binding domain maps to 28 to 185; it reads NNFKQGLKEQ…NKLIELKYQR (158 aa). 41–48 contributes to the ATP binding site; it reads GATGTGKT. Positions 94–117 match the Beta-hairpin motif; sequence YYDYYQPEAYVASSDTYIEKDSKI. The region spanning 432–594 is the Helicase C-terminal domain; that stretch reads QMDDLYFEIK…VTPTALNKTI (163 aa). The region spanning 629–664 is the UVR domain; it reads NKEIKRLQKTMKEAAKALDFEKAATLRDLILDLEKK.

This sequence belongs to the UvrB family. Forms a heterotetramer with UvrA during the search for lesions. Interacts with UvrC in an incision complex.

Its subcellular location is the cytoplasm. The UvrABC repair system catalyzes the recognition and processing of DNA lesions. A damage recognition complex composed of 2 UvrA and 2 UvrB subunits scans DNA for abnormalities. Upon binding of the UvrA(2)B(2) complex to a putative damaged site, the DNA wraps around one UvrB monomer. DNA wrap is dependent on ATP binding by UvrB and probably causes local melting of the DNA helix, facilitating insertion of UvrB beta-hairpin between the DNA strands. Then UvrB probes one DNA strand for the presence of a lesion. If a lesion is found the UvrA subunits dissociate and the UvrB-DNA preincision complex is formed. This complex is subsequently bound by UvrC and the second UvrB is released. If no lesion is found, the DNA wraps around the other UvrB subunit that will check the other stand for damage. The polypeptide is UvrABC system protein B (Aster yellows witches'-broom phytoplasma (strain AYWB)).